The primary structure comprises 382 residues: Prophage ps2 probable integrase (382 aa).

Residues 63-142 (AKFTDIAEEW…TLNLIFDYAV (80 aa)) form the Core-binding (CB) domain. The Tyr recombinase domain occupies 170 to 376 (IQNKYLEQNE…TENMKSSIID (207 aa)). Residues Arg-209, Lys-242, His-326, Arg-329, and His-352 contribute to the active site. The active-site O-(3'-phospho-DNA)-tyrosine intermediate is Tyr-363.

It belongs to the 'phage' integrase family.

The chain is Prophage ps2 probable integrase (ps201) from Lactococcus lactis subsp. lactis (strain IL1403) (Streptococcus lactis).